The chain runs to 254 residues: Demethylmenaquinone methyltransferase (254 aa).

S-adenosyl-L-methionine is bound by residues Thr-62, Asp-80, 122–123 (DG), and Ser-139.

This sequence belongs to the class I-like SAM-binding methyltransferase superfamily. MenG/UbiE family.

The catalysed reaction is a 2-demethylmenaquinol + S-adenosyl-L-methionine = a menaquinol + S-adenosyl-L-homocysteine + H(+). It participates in quinol/quinone metabolism; menaquinone biosynthesis; menaquinol from 1,4-dihydroxy-2-naphthoate: step 2/2. In terms of biological role, methyltransferase required for the conversion of demethylmenaquinol (DMKH2) to menaquinol (MKH2). This chain is Demethylmenaquinone methyltransferase, found in Parafrankia sp. (strain EAN1pec).